The primary structure comprises 335 residues: Probable tRNA N6-adenosine threonylcarbamoyltransferase (335 aa).

Residues His-109, His-113, and Tyr-130 each contribute to the a divalent metal cation site. Residues 130–134 (YVSGG), Asp-162, Gly-177, Glu-181, and Asn-266 contribute to the substrate site. Asp-294 provides a ligand contact to a divalent metal cation.

It belongs to the KAE1 / TsaD family. As to quaternary structure, component of the EKC/KEOPS complex; the whole complex dimerizes. A divalent metal cation is required as a cofactor.

It is found in the cytoplasm. The protein resides in the nucleus. It carries out the reaction L-threonylcarbamoyladenylate + adenosine(37) in tRNA = N(6)-L-threonylcarbamoyladenosine(37) in tRNA + AMP + H(+). Its function is as follows. Component of the EKC/KEOPS complex that is required for the formation of a threonylcarbamoyl group on adenosine at position 37 (t(6)A37) in tRNAs that read codons beginning with adenine. The complex is probably involved in the transfer of the threonylcarbamoyl moiety of threonylcarbamoyl-AMP (TC-AMP) to the N6 group of A37. Osgep likely plays a direct catalytic role in this reaction, but requires other protein(s) of the complex to fulfill this activity. In Nematostella vectensis (Starlet sea anemone), this protein is Probable tRNA N6-adenosine threonylcarbamoyltransferase.